Reading from the N-terminus, the 288-residue chain is Fructokinase (288 aa).

T131 lines the ATP pocket. Zn(2+) contacts are provided by H154, C169, H172, and C175. Residues P183 and 231 to 235 each bind ATP; that span reads GVMNQ.

Belongs to the ROK (NagC/XylR) family. The cofactor is Mg(2+).

It catalyses the reaction D-fructose + ATP = D-fructose 6-phosphate + ADP + H(+). Inhibition by zinc ions. The polypeptide is Fructokinase (scrK) (Pediococcus pentosaceus).